The chain runs to 142 residues: MSLEQEIKQIVESCGAKLYDIETVSDRGKTIYRVTITAPEGVDLQKCVEISNLISPLLDVHPPVSGDYNLEVSSPGVERKLKKPSHFEHSVGEKVRVTKNDGETIEGVLSDFRDHTLTLQTKNGPIEIPLDQITYAKTIFEW.

It belongs to the RimP family.

The protein localises to the cytoplasm. Required for maturation of 30S ribosomal subunits. The protein is Ribosome maturation factor RimP of Nitratiruptor sp. (strain SB155-2).